A 418-amino-acid polypeptide reads, in one-letter code: Gamma-glutamyl phosphate reductase (418 aa).

Belongs to the gamma-glutamyl phosphate reductase family.

It is found in the cytoplasm. It carries out the reaction L-glutamate 5-semialdehyde + phosphate + NADP(+) = L-glutamyl 5-phosphate + NADPH + H(+). Its pathway is amino-acid biosynthesis; L-proline biosynthesis; L-glutamate 5-semialdehyde from L-glutamate: step 2/2. Functionally, catalyzes the NADPH-dependent reduction of L-glutamate 5-phosphate into L-glutamate 5-semialdehyde and phosphate. The product spontaneously undergoes cyclization to form 1-pyrroline-5-carboxylate. The protein is Gamma-glutamyl phosphate reductase of Agathobacter rectalis (strain ATCC 33656 / DSM 3377 / JCM 17463 / KCTC 5835 / VPI 0990) (Eubacterium rectale).